Here is a 638-residue protein sequence, read N- to C-terminus: Phosphomethylpyrimidine synthase (638 aa).

Substrate-binding positions include asparagine 243, methionine 272, tyrosine 301, histidine 337, 357–359, 398–401, and glutamate 437; these read SRG and DGLR. Histidine 441 contributes to the Zn(2+) binding site. A substrate-binding site is contributed by tyrosine 464. Zn(2+) is bound at residue histidine 505. [4Fe-4S] cluster is bound by residues cysteine 585, cysteine 588, and cysteine 593.

Belongs to the ThiC family. In terms of assembly, homodimer. [4Fe-4S] cluster serves as cofactor.

The catalysed reaction is 5-amino-1-(5-phospho-beta-D-ribosyl)imidazole + S-adenosyl-L-methionine = 4-amino-2-methyl-5-(phosphooxymethyl)pyrimidine + CO + 5'-deoxyadenosine + formate + L-methionine + 3 H(+). It participates in cofactor biosynthesis; thiamine diphosphate biosynthesis. Functionally, catalyzes the synthesis of the hydroxymethylpyrimidine phosphate (HMP-P) moiety of thiamine from aminoimidazole ribotide (AIR) in a radical S-adenosyl-L-methionine (SAM)-dependent reaction. This Aromatoleum aromaticum (strain DSM 19018 / LMG 30748 / EbN1) (Azoarcus sp. (strain EbN1)) protein is Phosphomethylpyrimidine synthase.